The following is a 197-amino-acid chain: Dephospho-CoA kinase (197 aa).

The DPCK domain maps to 2–197; sequence RIGLTGGIAS…YDALAKTAHE (196 aa). 10–15 provides a ligand contact to ATP; that stretch reads ASGKSL.

It belongs to the CoaE family.

The protein localises to the cytoplasm. The enzyme catalyses 3'-dephospho-CoA + ATP = ADP + CoA + H(+). It functions in the pathway cofactor biosynthesis; coenzyme A biosynthesis; CoA from (R)-pantothenate: step 5/5. Functionally, catalyzes the phosphorylation of the 3'-hydroxyl group of dephosphocoenzyme A to form coenzyme A. This is Dephospho-CoA kinase from Shouchella clausii (strain KSM-K16) (Alkalihalobacillus clausii).